The primary structure comprises 49 residues: Large ribosomal subunit protein bL33 (49 aa).

This sequence belongs to the bacterial ribosomal protein bL33 family.

This chain is Large ribosomal subunit protein bL33, found in Clostridium acetobutylicum (strain ATCC 824 / DSM 792 / JCM 1419 / IAM 19013 / LMG 5710 / NBRC 13948 / NRRL B-527 / VKM B-1787 / 2291 / W).